Reading from the N-terminus, the 483-residue chain is Altronate oxidoreductase (483 aa).

An NAD(+)-binding site is contributed by 18–29; it reads IIQFGEGNFLRA.

The protein belongs to the mannitol dehydrogenase family. UxaB subfamily.

The catalysed reaction is D-altronate + NAD(+) = keto-D-tagaturonate + NADH + H(+). Its pathway is carbohydrate metabolism; pentose and glucuronate interconversion. The polypeptide is Altronate oxidoreductase (Klebsiella pneumoniae (strain 342)).